A 310-amino-acid polypeptide reads, in one-letter code: Elongation factor Ts, mitochondrial (310 aa).

The N-terminal 42 residues, 1–42 (MGFQVLRSVIQAPLAKRSFLCKSCPSGLRVLYNNILLSSRSY), are a transit peptide targeting the mitochondrion.

It belongs to the EF-Ts family.

It localises to the mitochondrion. Its function is as follows. Associates with the EF-Tu.GDP complex and induces the exchange of GDP to GTP. It remains bound to the aminoacyl-tRNA.EF-Tu.GTP complex up to the GTP hydrolysis stage on the ribosome. This chain is Elongation factor Ts, mitochondrial (tsf1), found in Schizosaccharomyces japonicus (strain yFS275 / FY16936) (Fission yeast).